Reading from the N-terminus, the 209-residue chain is MTKGILGRKIGMTQLFSDNGELIPVTVIQAEPNVVLQKKTLENDGYEALQIGFADKKESRTNKAEKGHAEKAGTAPKRYVREIRGAEVNSFEVGQEIKVDIFESGEKIDVTGTSKGKGFQGVIKRHGQQRGPTTHGSHFHRAPGAMGVIDPMRVFKGKKLPGHMGSEQVTIQNLEVVSVDTDKNLLLIKGNVPGAKKSYVKITSAVKGN.

Belongs to the universal ribosomal protein uL3 family. In terms of assembly, part of the 50S ribosomal subunit. Forms a cluster with proteins L14 and L19.

In terms of biological role, one of the primary rRNA binding proteins, it binds directly near the 3'-end of the 23S rRNA, where it nucleates assembly of the 50S subunit. The chain is Large ribosomal subunit protein uL3 from Oceanobacillus iheyensis (strain DSM 14371 / CIP 107618 / JCM 11309 / KCTC 3954 / HTE831).